Here is a 505-residue protein sequence, read N- to C-terminus: tRNA-2-methylthio-N(6)-dimethylallyladenosine synthase (505 aa).

The tract at residues Met-1 to Leu-39 is disordered. Residues Met-47–Arg-162 enclose the MTTase N-terminal domain. Residues Cys-56, Cys-92, Cys-125, Cys-194, Cys-198, and Cys-201 each contribute to the [4Fe-4S] cluster site. A Radical SAM core domain is found at Pro-180–Arg-413. A TRAM domain is found at Ala-416–Gly-479.

The protein belongs to the methylthiotransferase family. MiaB subfamily. In terms of assembly, monomer. [4Fe-4S] cluster serves as cofactor.

Its subcellular location is the cytoplasm. It catalyses the reaction N(6)-dimethylallyladenosine(37) in tRNA + (sulfur carrier)-SH + AH2 + 2 S-adenosyl-L-methionine = 2-methylsulfanyl-N(6)-dimethylallyladenosine(37) in tRNA + (sulfur carrier)-H + 5'-deoxyadenosine + L-methionine + A + S-adenosyl-L-homocysteine + 2 H(+). Its function is as follows. Catalyzes the methylthiolation of N6-(dimethylallyl)adenosine (i(6)A), leading to the formation of 2-methylthio-N6-(dimethylallyl)adenosine (ms(2)i(6)A) at position 37 in tRNAs that read codons beginning with uridine. This Deinococcus radiodurans (strain ATCC 13939 / DSM 20539 / JCM 16871 / CCUG 27074 / LMG 4051 / NBRC 15346 / NCIMB 9279 / VKM B-1422 / R1) protein is tRNA-2-methylthio-N(6)-dimethylallyladenosine synthase.